The primary structure comprises 546 residues: Chaperonin GroEL 2 (546 aa).

ATP contacts are provided by residues 30-33, K51, 87-91, G415, and D496; these read TLGP and DGTTT.

The protein belongs to the chaperonin (HSP60) family. In terms of assembly, forms a cylinder of 14 subunits composed of two heptameric rings stacked back-to-back. Interacts with the co-chaperonin GroES.

The protein localises to the cytoplasm. The catalysed reaction is ATP + H2O + a folded polypeptide = ADP + phosphate + an unfolded polypeptide.. Functionally, together with its co-chaperonin GroES, plays an essential role in assisting protein folding. The GroEL-GroES system forms a nano-cage that allows encapsulation of the non-native substrate proteins and provides a physical environment optimized to promote and accelerate protein folding. This is Chaperonin GroEL 2 from Bradyrhizobium sp. (strain ORS 278).